The chain runs to 106 residues: METSNVQVALVQLFQSHTLNCSELVPEVKNGASFVTSCFSLVVAPDFVMNGSSGESTLIFLESLIIFESGDSTEAIESCGLISNTLAFLFLGLPTSILEDVDGDDE.

This is an uncharacterized protein from Saccharomyces cerevisiae (strain ATCC 204508 / S288c) (Baker's yeast).